Reading from the N-terminus, the 281-residue chain is Ribosomal protein L11 methyltransferase (281 aa).

S-adenosyl-L-methionine contacts are provided by threonine 133, glycine 154, aspartate 175, and asparagine 216.

The protein belongs to the methyltransferase superfamily. PrmA family.

The protein resides in the cytoplasm. It carries out the reaction L-lysyl-[protein] + 3 S-adenosyl-L-methionine = N(6),N(6),N(6)-trimethyl-L-lysyl-[protein] + 3 S-adenosyl-L-homocysteine + 3 H(+). Functionally, methylates ribosomal protein L11. The sequence is that of Ribosomal protein L11 methyltransferase from Campylobacter jejuni subsp. jejuni serotype O:2 (strain ATCC 700819 / NCTC 11168).